A 179-amino-acid chain; its full sequence is Ribosome maturation factor RimM (179 aa).

The PRC barrel domain occupies 101–179; that stretch reads EGEVYVHDLC…VELMHRWILE (79 aa).

Belongs to the RimM family. As to quaternary structure, binds ribosomal protein uS19.

It localises to the cytoplasm. Its function is as follows. An accessory protein needed during the final step in the assembly of 30S ribosomal subunit, possibly for assembly of the head region. Essential for efficient processing of 16S rRNA. May be needed both before and after RbfA during the maturation of 16S rRNA. It has affinity for free ribosomal 30S subunits but not for 70S ribosomes. The protein is Ribosome maturation factor RimM of Treponema denticola (strain ATCC 35405 / DSM 14222 / CIP 103919 / JCM 8153 / KCTC 15104).